Reading from the N-terminus, the 187-residue chain is High affinity copper uptake protein 1 (187 aa).

Topologically, residues 1–65 (MRMNHMEMHH…SSLVINTPGE (65 aa)) are extracellular. The Bis-His motif motif lies at 9–10 (HH). Residue asparagine 19 is glycosylated (N-linked (GlcNAc...) asparagine). A glycan (O-linked (GalNAc...) threonine) is linked at threonine 30. A helical membrane pass occupies residues 66–86 (MAGAFVAVFLLAMFYEGLKIA). Residues 87-129 (REGLLRKSQVSIRYNSMPVPGPNGTILMETHKTVGQQMLSFPH) are Cytoplasmic-facing. Residue threonine 111 is modified to Phosphothreonine. The chain crosses the membrane as a helical span at residues 130–150 (LLQTVLHIIQVVISYFLMLIF). Residues 151-153 (MTY) are Extracellular-facing. The chain crosses the membrane as a helical span at residues 154–174 (NGYLCIAVAAGAGTGYFLFSW). Residues 175-187 (KKAVVVDITEHCH) are Cytoplasmic-facing. Cysteine 186 is subject to Cysteine sulfenic acid (-SOH).

This sequence belongs to the copper transporter (Ctr) (TC 1.A.56) family. SLC31A subfamily. In terms of assembly, homotrimer; is stabilized by cisplatin via interactions between cisplatin and the methionine-rich clusters, and could be crucial for the copper(2+) reduction process and copper(1+) stabilization. Heterotrimer between SLC31A1, CCS and SOD1; this heterotrimer is copper(1+)-mediated and its maintenance is regulated through SOD1 activation. Interacts with KDR; this interaction is induced upon VEGFA stimulation leading to SLC31A1 and KDR subsequent co-internalization to early endosomes, thereby activating KDR downstream signaling in endothelial cells. Interacts (via C-terminal domain) with ATOX1 (via dimer form); this interaction improves ATOX1 stability and controls intracellular copper(1+) levels. Interacts with SLC31A2; this interaction stabilizes SLC31A2 and protects its from ubiquitination and degradation. Interacts (via C-terminal domain) with CCS; this interaction is copper(1+)-mediated. O-Glycosylation at Thr-30 protects from proteolytic cleavage in the N-terminal extracellular domain. Post-translationally, proteolytic cleavage, leading to a truncated form, is facilitated by SLC31A2 and initiated preferentially by CTSL and to a minor extend by CTSB in endolysosomal compartments. A post-CTSL/cathepsin L processing occurs to yield to the fully truncated form. In terms of processing, sulfenylated at Cys-186 after stimulation with VEGFA, which induces SLC31A1-KDR disulfide bond formation and their co-internalization to early endosomes, driving to a sustained VEGFR2 signaling.

Its subcellular location is the cell membrane. The protein resides in the early endosome membrane. It localises to the recycling endosome membrane. It is found in the apical cell membrane. The protein localises to the late endosome membrane. Its subcellular location is the basolateral cell membrane. The enzyme catalyses Cu(+)(out) = Cu(+)(in). It catalyses the reaction Ag(+)(out) = Ag(+)(in). Its activity is regulated as follows. Copper uptake is inhibited by cold temperature, silver and zinc ions. Platinum-containing chemotherapeutic agents uptake is inhibited by cold temperature and copper. In terms of biological role, uniporter that mediates the transport of copper(1+) from the extracellular space to the cytoplasm, across the plasma membrane. Then, delivers directly copper(1+) to specific chaperone such as ATOX1, via a copper(1+)- mediated transient interaction between the C-terminal domain and a copper(1+) chaperone, thus controlling intracellular copper(1+) levels. May function in copper(1+) import from the apical membrane thus may drive intestinal copper absorption. The copper(1+) transport mechanism is sodium-independent, saturable and of high-affinity. Also mediates the uptake of silver(1+). May function in the influx of the platinum-containing chemotherapeutic agents. The platinum-containing chemotherapeutic agents uptake is saturable. Also participates in the first step of copper(2+) acquisition by cells through a direct transfer of copper(2+) from copper(2+) carriers in blood, such as ALB to the N-terminal domain of SLC31A1, leading to copper(2+) reduction and probably followed by copper(1+) stabilization. In addition, functions as a redox sensor to promote angiogenesis in endothelial cells, in a copper(1+) transport independent manner, by transmitting the VEGF-induced ROS signal through a sulfenylation at Cys-189 leading to a subsequent disulfide bond formation between SLC31A1 and KDR. The SLC31A1-KDR complex is then co-internalized to early endosomes, driving a sustained VEGFR2 signaling. Functionally, mobilizes copper(1+) out of the endosomal compartment, making copper(1+) available for export out of the cells. This Rattus norvegicus (Rat) protein is High affinity copper uptake protein 1.